A 427-amino-acid polypeptide reads, in one-letter code: Enolase (427 aa).

Q163 is a (2R)-2-phosphoglycerate binding site. E205 (proton donor) is an active-site residue. Mg(2+)-binding residues include D242, E285, and D312. The (2R)-2-phosphoglycerate site is built by K337, R366, S367, and K388. K337 acts as the Proton acceptor in catalysis.

The protein belongs to the enolase family. It depends on Mg(2+) as a cofactor.

Its subcellular location is the cytoplasm. It localises to the secreted. The protein resides in the cell surface. It carries out the reaction (2R)-2-phosphoglycerate = phosphoenolpyruvate + H2O. Its pathway is carbohydrate degradation; glycolysis; pyruvate from D-glyceraldehyde 3-phosphate: step 4/5. Catalyzes the reversible conversion of 2-phosphoglycerate (2-PG) into phosphoenolpyruvate (PEP). It is essential for the degradation of carbohydrates via glycolysis. The sequence is that of Enolase from Nitrobacter hamburgensis (strain DSM 10229 / NCIMB 13809 / X14).